The primary structure comprises 657 residues: PAN2-PAN3 deadenylation complex subunit PAN3 (657 aa).

Disordered stretches follow at residues M1–D29, H52–I98, and S115–I135. Residues A27–S55 form a C3H1-type zinc finger. Residues H52 to S67 show a composition bias toward basic and acidic residues. Composition is skewed to polar residues over residues D75 to I98 and S115 to E132. Residues Q259 to S521 are pseudokinase domain. ATP-binding positions include R311, D360–T367, and S421–K422. Residues S522–F560 are a coiled coil. The interval I561–I657 is knob domain.

It belongs to the protein kinase superfamily. PAN3 family. In terms of assembly, homodimer. Forms a heterotrimer with a catalytic subunit PAN2 to form the poly(A)-nuclease (PAN) deadenylation complex. Interacts (via PAM-2 motif) with poly(A)-binding protein PAB1 (via PABC domain), conferring substrate specificity of the enzyme complex.

It localises to the cytoplasm. In terms of biological role, regulatory subunit of the poly(A)-nuclease (PAN) deadenylation complex, one of two cytoplasmic mRNA deadenylases involved in mRNA turnover. PAN specifically shortens poly(A) tails of RNA and the activity is stimulated by poly(A)-binding protein PAB1. PAN deadenylation is followed by rapid degradation of the shortened mRNA tails by the CCR4-NOT complex. Deadenylated mRNAs are then degraded by two alternative mechanisms, namely exosome-mediated 3'-5' exonucleolytic degradation, or deadenylation-dependent mRNA decaping and subsequent 5'-3' exonucleolytic degradation by XRN1. May also be involved in post-transcriptional maturation of mRNA poly(A) tails. PAN3 acts as a positive regulator for PAN activity, recruiting the catalytic subunit PAN2 to mRNA via its interaction with RNA and with PAB1. The sequence is that of PAN2-PAN3 deadenylation complex subunit PAN3 from Coccidioides immitis (strain RS) (Valley fever fungus).